A 500-amino-acid chain; its full sequence is uncharacterized protein (500 aa).

The span at Met1 to Ile13 shows a compositional bias: low complexity. The tract at residues Met1–Arg23 is disordered. Ser9 is modified (phosphoserine). The next 12 membrane-spanning stretches (helical) occupy residues Val87 to Leu107, Leu126 to Ala146, Leu156 to Cys176, Trp183 to Tyr203, Met225 to Ala245, Val261 to Phe281, Phe312 to Gln332, Gly351 to Leu371, Ile380 to Ala400, Val408 to Ile428, Ile445 to Ile465, and Val471 to Met491.

This sequence belongs to the major facilitator superfamily.

The protein localises to the golgi apparatus. Its subcellular location is the membrane. This is an uncharacterized protein from Schizosaccharomyces pombe (strain 972 / ATCC 24843) (Fission yeast).